The chain runs to 280 residues: Bifunctional protein FolD (280 aa).

Residues 158–160 (GES), Ile183, and Ile222 each bind NADP(+).

It belongs to the tetrahydrofolate dehydrogenase/cyclohydrolase family. In terms of assembly, homodimer.

The catalysed reaction is (6R)-5,10-methylene-5,6,7,8-tetrahydrofolate + NADP(+) = (6R)-5,10-methenyltetrahydrofolate + NADPH. The enzyme catalyses (6R)-5,10-methenyltetrahydrofolate + H2O = (6R)-10-formyltetrahydrofolate + H(+). Its pathway is one-carbon metabolism; tetrahydrofolate interconversion. Its function is as follows. Catalyzes the oxidation of 5,10-methylenetetrahydrofolate to 5,10-methenyltetrahydrofolate and then the hydrolysis of 5,10-methenyltetrahydrofolate to 10-formyltetrahydrofolate. The polypeptide is Bifunctional protein FolD (Mycoplasma mobile (strain ATCC 43663 / 163K / NCTC 11711) (Mesomycoplasma mobile)).